The primary structure comprises 205 residues: Cytochrome c biogenesis ATP-binding export protein CcmA 2 (205 aa).

In terms of domain architecture, ABC transporter spans 2 to 205 (LEARDLYCER…LALTGGGAGL (204 aa)). An ATP-binding site is contributed by 34–41 (GGNGAGKT).

It belongs to the ABC transporter superfamily. CcmA exporter (TC 3.A.1.107) family. In terms of assembly, the complex is composed of two ATP-binding proteins (CcmA) and two transmembrane proteins (CcmB).

The protein resides in the cell inner membrane. It catalyses the reaction heme b(in) + ATP + H2O = heme b(out) + ADP + phosphate + H(+). In terms of biological role, part of the ABC transporter complex CcmAB involved in the biogenesis of c-type cytochromes; once thought to export heme, this seems not to be the case, but its exact role is uncertain. Responsible for energy coupling to the transport system. The protein is Cytochrome c biogenesis ATP-binding export protein CcmA 2 of Salmonella typhimurium (strain LT2 / SGSC1412 / ATCC 700720).